Here is a 98-residue protein sequence, read N- to C-terminus: DNA/RNA-binding protein Alba (98 aa).

Lys-16 bears the N6-acetyllysine mark.

It belongs to the histone-like Alba family. Post-translationally, acetylated. Acetylation at Lys-16 decreases DNA-binding affinity.

It localises to the cytoplasm. Its subcellular location is the chromosome. Its function is as follows. Binds double-stranded DNA tightly but without sequence specificity. Involved in DNA compaction. This Metallosphaera sedula (strain ATCC 51363 / DSM 5348 / JCM 9185 / NBRC 15509 / TH2) protein is DNA/RNA-binding protein Alba.